Here is a 219-residue protein sequence, read N- to C-terminus: Ribosomal RNA small subunit methyltransferase G (219 aa).

Gly-81, Leu-86, and Arg-150 together coordinate S-adenosyl-L-methionine.

The protein belongs to the methyltransferase superfamily. RNA methyltransferase RsmG family.

The protein resides in the cytoplasm. It catalyses the reaction guanosine(527) in 16S rRNA + S-adenosyl-L-methionine = N(7)-methylguanosine(527) in 16S rRNA + S-adenosyl-L-homocysteine. Specifically methylates the N7 position of guanine in position 527 of 16S rRNA. The chain is Ribosomal RNA small subunit methyltransferase G from Magnetococcus marinus (strain ATCC BAA-1437 / JCM 17883 / MC-1).